The sequence spans 493 residues: Ubiquitin carboxyl-terminal hydrolase 14 (493 aa).

The 77-residue stretch at 4-80 (YSVTVKWGKE…MMGSADALPE (77 aa)) folds into the Ubiquitin-like domain. The residue at position 52 (T52) is a Phosphothreonine. Residues 105-482 (CGLTNLGNTC…IAYVLLYGPR (378 aa)) enclose the USP domain. C114 functions as the Nucleophile in the catalytic mechanism. 2 positions are modified to phosphoserine: S143 and S148. T235 is subject to Phosphothreonine. Phosphoserine occurs at positions 237, 302, and 431. H434 serves as the catalytic Proton acceptor. The residue at position 448 (K448) is an N6-acetyllysine.

It belongs to the peptidase C19 family. USP14/UBP6 subfamily. Homodimer (Potential). Associates with the 26S proteasome. Interacts with FANCC, CXCR4 and ERN1. Interacts with TRIM14; this interaction recruits USP14 to cleave ubiquitin chains of CGAS and KDM4D.

The protein resides in the cytoplasm. The protein localises to the cell membrane. It carries out the reaction Thiol-dependent hydrolysis of ester, thioester, amide, peptide and isopeptide bonds formed by the C-terminal Gly of ubiquitin (a 76-residue protein attached to proteins as an intracellular targeting signal).. In terms of biological role, proteasome-associated deubiquitinase which releases ubiquitin from the proteasome targeted ubiquitinated proteins. Ensures the regeneration of ubiquitin at the proteasome. Is a reversibly associated subunit of the proteasome and a large fraction of proteasome-free protein exists within the cell. Required for the degradation of the chemokine receptor CXCR4 which is critical for CXCL12-induced cell chemotaxis. Also serves as a physiological inhibitor of endoplasmic reticulum-associated degradation (ERAD) under the non-stressed condition by inhibiting the degradation of unfolded endoplasmic reticulum proteins via interaction with ERN1. Indispensable for synaptic development and function at neuromuscular junctions (NMJs). Plays a role in the innate immune defense against viruses by stabilizing the viral DNA sensor CGAS and thus inhibiting its autophagic degradation. Inhibits OPTN-mediated selective autophagic degradation of KDM4D and thereby negatively regulates H3K9me2 and H3K9me3. In Mus musculus (Mouse), this protein is Ubiquitin carboxyl-terminal hydrolase 14 (Usp14).